Here is a 131-residue protein sequence, read N- to C-terminus: Ribosome-binding factor A (131 aa).

It belongs to the RbfA family. As to quaternary structure, monomer. Binds 30S ribosomal subunits, but not 50S ribosomal subunits or 70S ribosomes.

It localises to the cytoplasm. Functionally, one of several proteins that assist in the late maturation steps of the functional core of the 30S ribosomal subunit. Associates with free 30S ribosomal subunits (but not with 30S subunits that are part of 70S ribosomes or polysomes). Required for efficient processing of 16S rRNA. May interact with the 5'-terminal helix region of 16S rRNA. The polypeptide is Ribosome-binding factor A (Pseudomonas fluorescens (strain SBW25)).